Consider the following 165-residue polypeptide: Probable DNA polymerase III subunit chi (165 aa).

Belongs to the DNA polymerase III chi/HolC chain family. DNA polymerase III contains a core (composed of alpha, epsilon and theta chains) that associates with a tau subunit. This core dimerizes to form the POLIII' complex. PolIII' associates with the gamma complex (composed of gamma, delta, delta', psi and chi chains) and with the beta chain to form the complete DNA polymerase III complex. Interacts directly with the psi subunit (holD). The only subunit of the DNA polymerase III holoenzyme known to interact with single-stranded DNA binding protein (SSB).

It carries out the reaction DNA(n) + a 2'-deoxyribonucleoside 5'-triphosphate = DNA(n+1) + diphosphate. Part of the beta sliding clamp loading complex, which hydrolyzes ATP to load the beta clamp onto primed DNA to form the DNA replication pre-initiation complex. DNA polymerase III is a complex, multichain enzyme responsible for most of the replicative synthesis in bacteria. This DNA polymerase also exhibits 3' to 5' exonuclease activity. This is Probable DNA polymerase III subunit chi from Rickettsia prowazekii (strain Madrid E).